The following is a 216-amino-acid chain: Histidine biosynthesis bifunctional protein HisIE (216 aa).

The interval 1–132 (MENILKELKF…KVYEAENAKI (132 aa)) is phosphoribosyl-AMP cyclohydrolase. A phosphoribosyl-ATP pyrophosphohydrolase region spans residues 133-216 (LQEIYDVIVD…IKLEDIYEEA (84 aa)).

It in the N-terminal section; belongs to the PRA-CH family. The protein in the C-terminal section; belongs to the PRA-PH family.

The protein localises to the cytoplasm. It carries out the reaction 1-(5-phospho-beta-D-ribosyl)-ATP + H2O = 1-(5-phospho-beta-D-ribosyl)-5'-AMP + diphosphate + H(+). It catalyses the reaction 1-(5-phospho-beta-D-ribosyl)-5'-AMP + H2O = 1-(5-phospho-beta-D-ribosyl)-5-[(5-phospho-beta-D-ribosylamino)methylideneamino]imidazole-4-carboxamide. It functions in the pathway amino-acid biosynthesis; L-histidine biosynthesis; L-histidine from 5-phospho-alpha-D-ribose 1-diphosphate: step 2/9. The protein operates within amino-acid biosynthesis; L-histidine biosynthesis; L-histidine from 5-phospho-alpha-D-ribose 1-diphosphate: step 3/9. The polypeptide is Histidine biosynthesis bifunctional protein HisIE (hisI) (Thermoanaerobacter pseudethanolicus (strain ATCC 33223 / 39E) (Clostridium thermohydrosulfuricum)).